Reading from the N-terminus, the 294-residue chain is 4-hydroxy-tetrahydrodipicolinate synthase (294 aa).

Threonine 44 is a pyruvate binding site. Tyrosine 132 acts as the Proton donor/acceptor in catalysis. Lysine 161 functions as the Schiff-base intermediate with substrate in the catalytic mechanism. Isoleucine 206 is a pyruvate binding site.

The protein belongs to the DapA family. In terms of assembly, homotetramer; dimer of dimers.

It localises to the cytoplasm. The enzyme catalyses L-aspartate 4-semialdehyde + pyruvate = (2S,4S)-4-hydroxy-2,3,4,5-tetrahydrodipicolinate + H2O + H(+). The protein operates within amino-acid biosynthesis; L-lysine biosynthesis via DAP pathway; (S)-tetrahydrodipicolinate from L-aspartate: step 3/4. Functionally, catalyzes the condensation of (S)-aspartate-beta-semialdehyde [(S)-ASA] and pyruvate to 4-hydroxy-tetrahydrodipicolinate (HTPA). The polypeptide is 4-hydroxy-tetrahydrodipicolinate synthase (Thermotoga neapolitana (strain ATCC 49049 / DSM 4359 / NBRC 107923 / NS-E)).